Consider the following 262-residue polypeptide: Type III pantothenate kinase (262 aa).

Residue 6–13 (DVGNTNAV) participates in ATP binding. Residues Tyr-100 and 107–110 (GADR) each bind substrate. Residue Asp-109 is the Proton acceptor of the active site. Asp-129 contributes to the K(+) binding site. Thr-132 contributes to the ATP binding site. Thr-184 lines the substrate pocket.

It belongs to the type III pantothenate kinase family. As to quaternary structure, homodimer. NH4(+) is required as a cofactor. K(+) serves as cofactor.

The protein localises to the cytoplasm. The catalysed reaction is (R)-pantothenate + ATP = (R)-4'-phosphopantothenate + ADP + H(+). It functions in the pathway cofactor biosynthesis; coenzyme A biosynthesis; CoA from (R)-pantothenate: step 1/5. Functionally, catalyzes the phosphorylation of pantothenate (Pan), the first step in CoA biosynthesis. This Bacillus cytotoxicus (strain DSM 22905 / CIP 110041 / 391-98 / NVH 391-98) protein is Type III pantothenate kinase.